We begin with the raw amino-acid sequence, 97 residues long: Serine protease inhibitor Kazal-type 8 (97 aa).

The N-terminal stretch at 1–21 (MKGICSDAILVLATSMWMAFA) is a signal peptide. One can recognise a Kazal-like domain in the interval 36 to 96 (DKTIVECLKN…TKLYDGQCEN (61 aa)). 3 cysteine pairs are disulfide-bonded: cysteine 42–cysteine 76, cysteine 49–cysteine 73, and cysteine 62–cysteine 94. Asparagine 85 carries an N-linked (GlcNAc...) asparagine glycan.

Its subcellular location is the secreted. Its function is as follows. Probable serine protease inhibitor. This chain is Serine protease inhibitor Kazal-type 8 (SPINK8), found in Homo sapiens (Human).